The chain runs to 264 residues: Thymidylate synthase (264 aa).

R21 provides a ligand contact to dUMP. Position 51 (H51) interacts with (6R)-5,10-methylene-5,6,7,8-tetrahydrofolate. 126 to 127 (RR) is a dUMP binding site. The active-site Nucleophile is C146. Residues 166 to 169 (RSCD), N177, and 207 to 209 (HLY) each bind dUMP. D169 is a (6R)-5,10-methylene-5,6,7,8-tetrahydrofolate binding site. A263 is a (6R)-5,10-methylene-5,6,7,8-tetrahydrofolate binding site.

Belongs to the thymidylate synthase family. Bacterial-type ThyA subfamily. Homodimer.

It localises to the cytoplasm. It catalyses the reaction dUMP + (6R)-5,10-methylene-5,6,7,8-tetrahydrofolate = 7,8-dihydrofolate + dTMP. The protein operates within pyrimidine metabolism; dTTP biosynthesis. Catalyzes the reductive methylation of 2'-deoxyuridine-5'-monophosphate (dUMP) to 2'-deoxythymidine-5'-monophosphate (dTMP) while utilizing 5,10-methylenetetrahydrofolate (mTHF) as the methyl donor and reductant in the reaction, yielding dihydrofolate (DHF) as a by-product. This enzymatic reaction provides an intracellular de novo source of dTMP, an essential precursor for DNA biosynthesis. This Xenorhabdus nematophila (strain ATCC 19061 / DSM 3370 / CCUG 14189 / LMG 1036 / NCIMB 9965 / AN6) protein is Thymidylate synthase.